The chain runs to 721 residues: Angiomotin-like 2a (721 aa).

The disordered stretch occupies residues 35–84 (QQALRGGSSGGGAGSPRSSLESLTQEESLSPQLSARQEPQGQEHQGDFQH). A compositionally biased stretch (low complexity) spans 49–68 (SPRSSLESLTQEESLSPQLS). A Phosphotyrosine; by FGFR1 modification is found at Tyr103. The segment at 169–214 (DNIPMSSSHSYPQLSNNHSDTVVNEQSVHQPDQRGPPPEYPFMVRS) is disordered. The span at 172–198 (PMSSSHSYPQLSNNHSDTVVNEQSVHQ) shows a compositional bias: polar residues. Residues 275-531 (ANNFQMEQLI…TRWEQKYLEE (257 aa)) adopt a coiled-coil conformation. Positions 554–567 (INHSPRNSPNSSFN) are enriched in polar residues. 2 disordered regions span residues 554–575 (INHS…SPNH) and 666–709 (DSST…TQIS). The span at 688–702 (SAPEPSTASSSESTS) shows a compositional bias: low complexity. The PDZ-binding motif lies at 718–721 (EILI).

The protein belongs to the angiomotin family. As to quaternary structure, interacts with SRC. Phosphorylation at Tyr-103 is necessary for efficient binding to SRC and synergistically functioning with SRC to activate the downstream MAPK pathway. In terms of tissue distribution, expressed in endothelial cells.

Its subcellular location is the recycling endosome. It localises to the cytoplasm. The protein resides in the cell projection. It is found in the podosome. The protein localises to the cell junction. Its function is as follows. Required for proper architecture of actin filaments and for cell movements during embryogenesis. Plays a role in the radial actin fiber architecture in skin epithelial cells, thereby maintains cell geometry, size and cell interconnectivity within the skin. Plays an important role in coupling actin fibers to cell junctions in endothelial cells and is therefore required for correct endothelial cell morphology and maintenance of dorsal aorta lumen expansion during embryogenesis. May further play a role in the polarity, proliferation and migration of endothelial cells, and therefore participates in angiogenesis. Inhibits the Wnt/beta-catenin signaling pathway, probably by recruiting CTNNB1 to recycling endosomes and hence preventing its translocation to the nucleus. Regulates the translocation of phosphorylated SRC to peripheral cell-matrix adhesion sites. Selectively promotes FGF-induced MAPK activation through SRC. In Danio rerio (Zebrafish), this protein is Angiomotin-like 2a (amotl2a).